Consider the following 443-residue polypeptide: Mitochondrial enolase superfamily member 1 (443 aa).

Residues 24–26 (GSD) and Tyr-34 each bind substrate. Ser-148 carries the phosphoserine modification. Lys-220 contributes to the substrate binding site. The active-site Proton donor/acceptor is Lys-222. Asp-250 contributes to the Mg(2+) binding site. Substrate is bound by residues Asn-252, Glu-276, Glu-305, 355 to 357 (HAG), and Glu-386. Glu-276 and Glu-305 together coordinate Mg(2+). The active site involves His-355.

This sequence belongs to the mandelate racemase/muconate lactonizing enzyme family. ENOSF1 subfamily. Mg(2+) is required as a cofactor. Post-translationally, could be sumoylated.

It localises to the mitochondrion. The catalysed reaction is L-fuconate = 2-dehydro-3-deoxy-L-fuconate + H2O. In terms of biological role, plays a role in the catabolism of L-fucose, a sugar that is part of the carbohydrates that are attached to cellular glycoproteins. Catalyzes the dehydration of L-fuconate to 2-keto-3-deoxy-L-fuconate by the abstraction of the 2-proton to generate an enediolate intermediate that is stabilized by the magnesium ion. May down-regulate thymidylate synthase activity, possibly already at the RNA level, by promoting the degradation of TYMS mRNA via an antisense RNA-based mechanism. The chain is Mitochondrial enolase superfamily member 1 (ENOSF1) from Pongo abelii (Sumatran orangutan).